A 958-amino-acid chain; its full sequence is MSKAELAVLERRLRPIYDSLDSQQFKKALSDCDKVLKKHPNTSAAKVLKALTLIRLEKLADATEILEALDVPGAHHDELTLQAFVHCYRDSNQHMKVVTLYERIIQVDPSEHNLTQLFMAYSREKMYKEQQKIGMRLYKDFGNAPYYFWSVMSLIMQAQENPELGKKMLLPLADKMCQTQVEKSGYTEGSSAELDLQLLILEGQEKWKECAAFLDRPQASVLPMAPYNLVEKGMDFLMKDKQYKRVDQLAMEAVTKMPDNWNLWKIITESTICQIEQCLESDNKENIELAHNFVKRLGLLIEKVQKQVGYKSRAPFIATFFAYKQIGKLTKQIPDMDDMTSIFGEQVDKMLEYAKNFYKKPVCFADLQMFFCDLTSEQKSNFLKGIDLWIGEVSAKDDVEGDESKVWAIILTERCRRALGEYEKMDAAGHRSLFQQCIAQIAAPERTEHAQGVLCNLTVSHLWDAYRKENDLTKFYEMILLLEFVAASNKTDPMCKLALIRAYSALCATGRISALVKTLDIKVIQMDTLGHLTFPVYETSGRFNLAIIQNTQLSLMYEQAEKEIQDCIAQAYRNGKFSAIPRMTAASKHMKLSAQKTACDVMNRYLSSLFVLDDVDQITVTLWGDEDPIGEKRIDWKQLIDTRDFNAIPYTETEEYEALLDDMKKRTFKELIDISELRSTLCRALGAVGRVTHENMEPRLARLQLKMTVMEFKQHLEYCCREYPSFLIPSKLAQSPAPHHLSQWVHSGGLQMVLEYLEAAVKLVDILDSGEHPEKSLVGTRTEMATKLIKLIEIPPKRKEGEKLPPFWIVDPIIKSSRALQTIAAIQVVLRLIEKVVLKLVKNVPTAVPEPVGKGKGKKDKKAAEEAMTKALDECKAVVFLEHIRAMHVELRSAGNFLHTYLGQMLALEDEYIPSNIGEDLGGAKAALEGMHNPVASRLQRSFLNTCEDMHTTIKLRF.

TPR repeat units follow at residues 7-42, 78-111, and 320-353; these read AVLE…HPNT, ELTL…DPSE, and FFAY…MLEY.

The protein belongs to the MDM20/NAA25 family. In terms of assembly, component of the N-terminal acetyltransferase B (NatB) complex. Interacts with acer-1. As to expression, expressed in germline and somatic cells.

The protein localises to the cytoplasm. The protein resides in the nucleus. Its subcellular location is the chromosome. Non-catalytic subunit of the NatB complex which catalyzes acetylation of the N-terminal methionine residues of proteins beginning with Met-Asp or Met-Glu. Required for chromosome organization and arrangement; specifically for assembly of the central region components of the synaptonemal complex onto chromosomes during meiosis and for DNA double stranded break formation and repair. Acts downstream of xnd-1 to regulate levels of histone acetylation in germ and somatic cell nuclei by controlling acetyl-CoA production through antagonizing the acetyl-CoA hydrolase activity of acer-1. The protein is N-terminal acetyltransferase B complex subunit NAA25 homolog of Caenorhabditis elegans.